A 93-amino-acid polypeptide reads, in one-letter code: UPF0473 protein YrzB (93 aa).

This sequence belongs to the UPF0473 family.

The protein is UPF0473 protein YrzB (yrzB) of Bacillus subtilis (strain 168).